The chain runs to 76 residues: Anaredoxin (76 aa).

Positions 24 to 66 (CMVCWEVNSKANGHHLIPYSEGGSADIQNMMTLCPSCHTKYHK) constitute an HNH domain.

This sequence belongs to the HNH nuclease family.

Its function is as follows. Putative P-450 reductase. The protein is Anaredoxin of Nostoc sp. (strain PCC 7120 / SAG 25.82 / UTEX 2576).